A 242-amino-acid chain; its full sequence is Small ribosomal subunit protein uS2 (242 aa).

It belongs to the universal ribosomal protein uS2 family.

This Vibrio vulnificus (strain CMCP6) protein is Small ribosomal subunit protein uS2.